A 191-amino-acid polypeptide reads, in one-letter code: Large ribosomal subunit protein uL6B (191 aa).

The protein belongs to the universal ribosomal protein uL6 family. In terms of assembly, component of the large ribosomal subunit (LSU). Mature yeast ribosomes consist of a small (40S) and a large (60S) subunit. The 40S small subunit contains 1 molecule of ribosomal RNA (18S rRNA) and 33 different proteins (encoded by 57 genes). The large 60S subunit contains 3 rRNA molecules (25S, 5.8S and 5S rRNA) and 46 different proteins (encoded by 81 genes).

It is found in the cytoplasm. Component of the ribosome, a large ribonucleoprotein complex responsible for the synthesis of proteins in the cell. The small ribosomal subunit (SSU) binds messenger RNAs (mRNAs) and translates the encoded message by selecting cognate aminoacyl-transfer RNA (tRNA) molecules. The large subunit (LSU) contains the ribosomal catalytic site termed the peptidyl transferase center (PTC), which catalyzes the formation of peptide bonds, thereby polymerizing the amino acids delivered by tRNAs into a polypeptide chain. The nascent polypeptides leave the ribosome through a tunnel in the LSU and interact with protein factors that function in enzymatic processing, targeting, and the membrane insertion of nascent chains at the exit of the ribosomal tunnel. This chain is Large ribosomal subunit protein uL6B, found in Saccharomyces cerevisiae (strain ATCC 204508 / S288c) (Baker's yeast).